The sequence spans 348 residues: VIP36-like protein (348 aa).

The first 38 residues, M1–G38, serve as a signal peptide directing secretion. The Lumenal portion of the chain corresponds to P39–A313. Residues E49–L274 form the L-type lectin-like domain. 2 residues coordinate a carbohydrate: S93 and D128. Ca(2+)-binding residues include D159, Y161, and N163. Y161–N163 serves as a coordination point for a carbohydrate. N181 carries an N-linked (GlcNAc...) asparagine glycan. H188 is an a carbohydrate binding site. Residue D191 participates in Ca(2+) binding. Residues C200 and C237 are joined by a disulfide bond. G258–L260 is a binding site for a carbohydrate. Residues L314–I334 traverse the membrane as a helical segment. Residues L335 to Y348 are Cytoplasmic-facing. Residues R344–R346 carry the Endoplasmic reticulum retention signal motif.

Its subcellular location is the endoplasmic reticulum membrane. The protein resides in the golgi apparatus membrane. Its function is as follows. May be involved in the regulation of export from the endoplasmic reticulum of a subset of glycoproteins. May function as a regulator of ERGIC-53. The sequence is that of VIP36-like protein (LMAN2L) from Pongo abelii (Sumatran orangutan).